The chain runs to 435 residues: Tol-Pal system protein TolB (435 aa).

A signal peptide spans 1 to 24; it reads MIPMPKMIRSLLLLFCLLPLGAQA.

It belongs to the TolB family. As to quaternary structure, the Tol-Pal system is composed of five core proteins: the inner membrane proteins TolA, TolQ and TolR, the periplasmic protein TolB and the outer membrane protein Pal. They form a network linking the inner and outer membranes and the peptidoglycan layer.

It is found in the periplasm. Part of the Tol-Pal system, which plays a role in outer membrane invagination during cell division and is important for maintaining outer membrane integrity. The polypeptide is Tol-Pal system protein TolB (Thioalkalivibrio sulfidiphilus (strain HL-EbGR7)).